We begin with the raw amino-acid sequence, 272 residues long: 2-dehydro-3-deoxyphosphooctonate aldolase (272 aa).

It belongs to the KdsA family.

The protein localises to the cytoplasm. It catalyses the reaction D-arabinose 5-phosphate + phosphoenolpyruvate + H2O = 3-deoxy-alpha-D-manno-2-octulosonate-8-phosphate + phosphate. The protein operates within carbohydrate biosynthesis; 3-deoxy-D-manno-octulosonate biosynthesis; 3-deoxy-D-manno-octulosonate from D-ribulose 5-phosphate: step 2/3. It functions in the pathway bacterial outer membrane biogenesis; lipopolysaccharide biosynthesis. The protein is 2-dehydro-3-deoxyphosphooctonate aldolase of Geobacter metallireducens (strain ATCC 53774 / DSM 7210 / GS-15).